We begin with the raw amino-acid sequence, 358 residues long: Probable anti-sigma-M factor YhdL (358 aa).

The helical transmembrane segment at 74–96 (ISVLAVISTLMILPLCTLGSYLY) threads the bilayer.

As to quaternary structure, the N-terminus of YhdL interacts with sigma-M. YhdL interacts specifically with YhdK.

It is found in the membrane. In Bacillus subtilis (strain 168), this protein is Probable anti-sigma-M factor YhdL (yhdL).